The following is a 29-amino-acid chain: Kappa-theraphotoxin-Ps1a (29 aa).

3 cysteine pairs are disulfide-bonded: Cys-2/Cys-16, Cys-9/Cys-21, and Cys-15/Cys-25. Residue Ile-29 is modified to Isoleucine amide.

The protein belongs to the neurotoxin 30 (phrixotoxin) family. In terms of tissue distribution, expressed by the venom gland.

It is found in the secreted. In terms of biological role, potent and specific blocker of Kv4.2/KCND2 (IC(50)=5 nM) and Kv4.3/KCND3 (IC(50)=28 nM) potassium channels. Acts by altering the gating properties of these channels. Also shows moderate inhibition on human voltage-gated sodium channel Nav1.7/SCN9A activation (IC(50)=423 nM). The chain is Kappa-theraphotoxin-Ps1a from Paraphysa scrofa (Chilean copper tarantula).